We begin with the raw amino-acid sequence, 176 residues long: Oleosin Ara h 14.0101 (176 aa).

At Ala-2 the chain carries N-acetylalanine; alternate. 2 consecutive transmembrane segments (helical) span residues 50–80 and 95–117; these read IIAVLVGVPTGGTLLLLSGLSLLGTIIGLAI and AVVTIGLAVTGILTAGACGLTGL. Residues 157-176 are disordered; it reads TKDAGQQIQTKAQDVKRSSS.

The protein belongs to the oleosin family. As to quaternary structure, homodimer. Forms oligomers. As to expression, expressed in seeds (at protein level). Not expressed in leaves.

The protein localises to the lipid droplet. It is found in the membrane. In terms of biological role, may have a structural role to stabilize the lipid body during desiccation of the seed by preventing coalescence of the oil. Probably interacts with both lipid and phospholipid moieties of lipid bodies. May also provide recognition signals for specific lipase anchorage in lipolysis during seedling growth. The chain is Oleosin Ara h 14.0101 from Arachis hypogaea (Peanut).